Reading from the N-terminus, the 457-residue chain is tRNA modification GTPase MnmE (457 aa).

R22, E85, and R124 together coordinate (6S)-5-formyl-5,6,7,8-tetrahydrofolate. The region spanning 219-378 (GATVVIAGKP…LKEKIYDLVL (160 aa)) is the TrmE-type G domain. Position 229 (N229) interacts with K(+). GTP is bound by residues 229-234 (NTGKSS), 248-254 (TPVPGTT), 273-276 (DTAG), and 333-336 (NKAD). Residue S233 coordinates Mg(2+). K(+) is bound by residues T248, V250, and T253. Residue T254 coordinates Mg(2+). K457 contributes to the (6S)-5-formyl-5,6,7,8-tetrahydrofolate binding site.

The protein belongs to the TRAFAC class TrmE-Era-EngA-EngB-Septin-like GTPase superfamily. TrmE GTPase family. As to quaternary structure, homodimer. Heterotetramer of two MnmE and two MnmG subunits. K(+) serves as cofactor.

It localises to the cytoplasm. Its function is as follows. Exhibits a very high intrinsic GTPase hydrolysis rate. Involved in the addition of a carboxymethylaminomethyl (cmnm) group at the wobble position (U34) of certain tRNAs, forming tRNA-cmnm(5)s(2)U34. This Syntrophus aciditrophicus (strain SB) protein is tRNA modification GTPase MnmE.